A 412-amino-acid polypeptide reads, in one-letter code: UV DNA damage endonuclease (412 aa).

Belongs to the uve1/UvsE family.

In terms of biological role, component in a DNA repair pathway. Removal of UV LIGHT damaged nucleotides. Recognizes pyrimidine dimers and cleave a phosphodiester bond immediately 5' to the lesion. In Clostridium perfringens (strain 13 / Type A), this protein is UV DNA damage endonuclease.